Reading from the N-terminus, the 365-residue chain is UDP-N-acetylglucosamine--N-acetylmuramyl-(pentapeptide) pyrophosphoryl-undecaprenol N-acetylglucosamine transferase (365 aa).

Residues 11 to 13, N124, R165, S192, I246, and Q291 each bind UDP-N-acetyl-alpha-D-glucosamine; that span reads TGG.

Belongs to the glycosyltransferase 28 family. MurG subfamily.

Its subcellular location is the cell inner membrane. The catalysed reaction is di-trans,octa-cis-undecaprenyl diphospho-N-acetyl-alpha-D-muramoyl-L-alanyl-D-glutamyl-meso-2,6-diaminopimeloyl-D-alanyl-D-alanine + UDP-N-acetyl-alpha-D-glucosamine = di-trans,octa-cis-undecaprenyl diphospho-[N-acetyl-alpha-D-glucosaminyl-(1-&gt;4)]-N-acetyl-alpha-D-muramoyl-L-alanyl-D-glutamyl-meso-2,6-diaminopimeloyl-D-alanyl-D-alanine + UDP + H(+). It functions in the pathway cell wall biogenesis; peptidoglycan biosynthesis. Its function is as follows. Cell wall formation. Catalyzes the transfer of a GlcNAc subunit on undecaprenyl-pyrophosphoryl-MurNAc-pentapeptide (lipid intermediate I) to form undecaprenyl-pyrophosphoryl-MurNAc-(pentapeptide)GlcNAc (lipid intermediate II). The protein is UDP-N-acetylglucosamine--N-acetylmuramyl-(pentapeptide) pyrophosphoryl-undecaprenol N-acetylglucosamine transferase of Nitratidesulfovibrio vulgaris (strain ATCC 29579 / DSM 644 / CCUG 34227 / NCIMB 8303 / VKM B-1760 / Hildenborough) (Desulfovibrio vulgaris).